The following is a 429-amino-acid chain: Phosphomethylpyrimidine synthase (429 aa).

Substrate is bound by residues Asn-66, Met-95, Tyr-124, His-163, Ser-185–Gly-187, Asp-226–Arg-229, and Glu-265. His-269 is a binding site for Zn(2+). Residue Tyr-292 participates in substrate binding. Residue His-333 coordinates Zn(2+). Residues Cys-409, Cys-412, and Cys-416 each coordinate [4Fe-4S] cluster.

The protein belongs to the ThiC family. Requires [4Fe-4S] cluster as cofactor.

It catalyses the reaction 5-amino-1-(5-phospho-beta-D-ribosyl)imidazole + S-adenosyl-L-methionine = 4-amino-2-methyl-5-(phosphooxymethyl)pyrimidine + CO + 5'-deoxyadenosine + formate + L-methionine + 3 H(+). The protein operates within cofactor biosynthesis; thiamine diphosphate biosynthesis. In terms of biological role, catalyzes the synthesis of the hydroxymethylpyrimidine phosphate (HMP-P) moiety of thiamine from aminoimidazole ribotide (AIR) in a radical S-adenosyl-L-methionine (SAM)-dependent reaction. The protein is Phosphomethylpyrimidine synthase of Carboxydothermus hydrogenoformans (strain ATCC BAA-161 / DSM 6008 / Z-2901).